Here is a 110-residue protein sequence, read N- to C-terminus: BET1-like protein (110 aa).

The Cytoplasmic portion of the chain corresponds to 1-85 (MADPWNRGHG…MVRSGRDNRK (85 aa)). The region spanning 14 to 76 (DMLDAENKRM…TGSVKRFSTM (63 aa)) is the t-SNARE coiled-coil homology domain. The helical; Anchor for type IV membrane protein transmembrane segment at 86-106 (ILCYVSVGLVVAFFLLYYLVS) threads the bilayer. Residues 107–110 (RMQN) lie on the Lumenal side of the membrane.

In terms of assembly, component of a SNARE complex consisting of stx5, ykt6, gosr2 and bet1l.

It localises to the golgi apparatus membrane. Its function is as follows. Vesicle SNARE required for targeting and fusion of retrograde transport vesicles with the Golgi complex. Required for the integrity of the Golgi complex. This Danio rerio (Zebrafish) protein is BET1-like protein (bet1l).